A 375-amino-acid polypeptide reads, in one-letter code: Filamin-binding LIM protein 1 (375 aa).

Positions 1-70 (MASKPEKRVA…SPWTPPGRAA (70 aa)) are filamin-binding. Disordered stretches follow at residues 43-119 (WEAP…PSEE) and 137-176 (HLSP…AERV). 2 stretches are compositionally biased toward pro residues: residues 104–114 (FPPPPPPPPVL) and 140–149 (PPLPPPPPQA). Residues 150 to 159 (PAERPSVQPS) are compositionally biased toward low complexity. LIM zinc-binding domains lie at 183 to 244 (DICA…TLER), 245 to 302 (CGKC…RKFA), and 303 to 372 (PVCS…RSAA). Residues 278–375 (IGDESFALGS…HVKRSAAGCC (98 aa)) are FERMT2-binding.

Interacts with FERMT2, FLNA, FLNB and FLNC. Interacts with NKX2-5.

Its subcellular location is the cell junction. The protein resides in the focal adhesion. It is found in the cytoplasm. The protein localises to the cytoskeleton. It localises to the stress fiber. In terms of biological role, serves as an anchoring site for cell-ECM adhesion proteins and filamin-containing actin filaments. Is implicated in cell shape modulation (spreading) and motility. May participate in the regulation of filamin-mediated cross-linking and stabilization of actin filaments. May also regulate the assembly of filamin-containing signaling complexes that control actin assembly. Promotes dissociation of FLNA from ITGB3 and ITGB7. Promotes activation of integrins and regulates integrin-mediated cell-cell adhesion. The chain is Filamin-binding LIM protein 1 (FBLIM1) from Pongo abelii (Sumatran orangutan).